Consider the following 589-residue polypeptide: Probable translation initiation factor IF-2 (589 aa).

One can recognise a tr-type G domain in the interval 14 to 229 (LRQPIVCVLG…LAGLAQRFLE (216 aa)). Positions 23 to 30 (GHVDHGKT) are G1. GTP is bound at residue 23–30 (GHVDHGKT). The G2 stretch occupies residues 48–52 (GITQR). Residues 84–87 (DTPG) are G3. Residues 84 to 88 (DTPGH) and 138 to 141 (NKID) contribute to the GTP site. Residues 138-141 (NKID) form a G4 region. A G5 region spans residues 206-208 (SAK).

Belongs to the TRAFAC class translation factor GTPase superfamily. Classic translation factor GTPase family. IF-2 subfamily.

Its function is as follows. Function in general translation initiation by promoting the binding of the formylmethionine-tRNA to ribosomes. Seems to function along with eIF-2. The sequence is that of Probable translation initiation factor IF-2 (infB) from Thermoplasma acidophilum (strain ATCC 25905 / DSM 1728 / JCM 9062 / NBRC 15155 / AMRC-C165).